We begin with the raw amino-acid sequence, 167 residues long: NADH-ubiquinone oxidoreductase chain 4 (167 aa).

3 helical membrane passes run 2 to 22 (FIGA…LFCL), 44 to 64 (LLPL…ALPP), and 86 to 106 (IILV…MLIM).

Belongs to the complex I subunit 4 family.

The protein localises to the mitochondrion membrane. The enzyme catalyses a ubiquinone + NADH + 5 H(+)(in) = a ubiquinol + NAD(+) + 4 H(+)(out). In terms of biological role, core subunit of the mitochondrial membrane respiratory chain NADH dehydrogenase (Complex I) that is believed to belong to the minimal assembly required for catalysis. Complex I functions in the transfer of electrons from NADH to the respiratory chain. The immediate electron acceptor for the enzyme is believed to be ubiquinone. The polypeptide is NADH-ubiquinone oxidoreductase chain 4 (MT-ND4) (Carlito syrichta (Philippine tarsier)).